We begin with the raw amino-acid sequence, 362 residues long: Endopolygalacturonase II (362 aa).

The N-terminal stretch at 1-21 (MHSFASLLAYGLAASATLASA) is a signal peptide. Positions 22–27 (SPIEAR) are excised as a propeptide. Cys30 and Cys45 are oxidised to a cystine. The stretch at 156 to 186 (ADDITLTDITINNADGDTLGGHNTDAFDVGN) is one PbH1 1 repeat. The active-site Proton donor is Asp201. Cysteines 203 and 219 form a disulfide. Residue His223 is part of the active site. PbH1 repeat units lie at residues 238–259 (VKNVTIEHSTVSNSENAVRIKT), 267–289 (VSEITYSNIVMSGISDYGVVIQQ), and 301–322 (TNGVTITDVKLESVTGTVDSKA). Asn240 is a glycosylation site (N-linked (GlcNAc...) (high mannose) asparagine). Disulfide bonds link Cys329–Cys334 and Cys353–Cys362.

Belongs to the glycosyl hydrolase 28 family.

It is found in the secreted. It carries out the reaction (1,4-alpha-D-galacturonosyl)n+m + H2O = (1,4-alpha-D-galacturonosyl)n + (1,4-alpha-D-galacturonosyl)m.. In terms of biological role, involved in maceration and soft-rotting of plant tissue. Hydrolyzes the 1,4-alpha glycosidic bonds of de-esterified pectate in the smooth region of the plant cell wall. The chain is Endopolygalacturonase II from Aspergillus niger.